We begin with the raw amino-acid sequence, 916 residues long: Pertactin autotransporter (916 aa).

The N-terminal stretch at 1 to 37 (MNMSLSRIVKAAPLRRTTLAMALGALGALGAAPAAHA) is a signal peptide. A Cell attachment site; involved in adhesion to various eukaryotic cell lines motif is present at residues 263-265 (RGD). 3 repeat units span residues 269–273 (GGAVP), 274–278 (GGAVP), and 279–283 (GGAVP). Residues 269 to 288 (GGAVPGGAVPGGAVPGGFGP) form a 4 X 5 AA tandem repeats of G-G-A-V-P region. The 4; approximate repeat unit spans residues 284–288 (GGFGP). The disordered stretch occupies residues 564–613 (SLVGAKAPPAPKPAPQPGPQPGPQPPQPPQPPQRQPEAPAPQPPAGRELS). The segment covering 571 to 607 (PPAPKPAPQPGPQPGPQPPQPPQPPQRQPEAPAPQPP) has biased composition (pro residues). A 6 X 3 AA repeats of P-Q-P region spans residues 578–606 (PQPGPQPGPQPPQPPQPPQRQPEAPAPQP). Positions 648–916 (LNPDAGGAWG…TFHAGYRYSW (269 aa)) constitute an Autotransporter domain. Positions 706–708 (RGD) match the Cell attachment site motif.

As to quaternary structure, monomer.

The protein resides in the periplasm. The protein localises to the secreted. It localises to the cell surface. It is found in the cell outer membrane. Functionally, agglutinogen that binds to eukaryotic cells; a process mediated by the R-G-D sequence. Pertactin may have a role in bacterial adhesion, and thus play a role in virulence. May contribute to the disease state of whooping cough. The chain is Pertactin autotransporter (prn) from Bordetella bronchiseptica (strain ATCC BAA-588 / NCTC 13252 / RB50) (Alcaligenes bronchisepticus).